The primary structure comprises 228 residues: uncharacterized protein (228 aa).

The ABC transporter domain maps to 7–228 (VEVHHLKKSV…LVNGQLQEEA (222 aa)). Residue 43 to 50 (GESGSGKS) coordinates ATP.

The protein belongs to the ABC transporter superfamily.

This is an uncharacterized protein from Escherichia coli O157:H7.